The primary structure comprises 230 residues: Broad specificity amino-acid racemase YgeA (230 aa).

Residues Met-10, Gln-52, and 83 to 85 (TNT) contribute to the substrate site. Thr-83 (proton donor) is an active-site residue. Cys-197 serves as the catalytic Proton acceptor. 198 to 199 (TE) serves as a coordination point for substrate.

It belongs to the aspartate/glutamate racemases family.

The enzyme catalyses an L-alpha-amino acid = a D-alpha-amino acid. It catalyses the reaction L-homoserine = D-homoserine. Its function is as follows. Amino-acid racemase able to utilize a broad range of substrates. Highest activity is observed with L-homoserine and D-homoserine. Has tenfold lower activity against L-methionine, L-leucine, L-valine and L-histidine. Has low activity with L-norvaline, L-asparagine, D-methionine, L-aminobutyric acid, L-isoleucine, L-serine, L-norleucine, L-alanine, L-glutamine, LL-diaminopimelic acid and L-phenylalanine. Has no activity against ten L-amino acids (Thr, Glu, Asp, Arg, Lys, Tyr, Trp, Orn, Cit and Aad). D-amino acids might be used as components of peptidoglycan and/or be involved in peptidoglycan metabolism and remodeling. This is Broad specificity amino-acid racemase YgeA (ygeA) from Escherichia coli (strain K12).